Reading from the N-terminus, the 820-residue chain is Crinkler effector protein 108 (820 aa).

The N-terminal stretch at 1–17 (MVKLYCAVVGVAGSAFS) is a signal peptide. The interval 18–55 (VRVDESDTVDDLKDAIKAKKPNDFKDIDADKLELYVAK) is LQLFLAK domain. The segment at 58 to 111 (GVWLTEADVKSGVADITGLVRLEVVRAKLFSVGLSDEVVSEVDAQEEAAGRGPV) is DWL domain. The HVLVXXP motif signature appears at 112-117 (NVLVVV). The Host nuclear localization signal signature appears at 118–124 (PMKKRRV). Residues 125 to 820 (DAGVDEERRF…MHYDDDEADL (696 aa)) are C-terminal DC effector domain. N-linked (GlcNAc...) asparagine glycans are attached at residues Asn-268, Asn-371, and Asn-703. A hhH DNA-binding domain region spans residues 754–791 (NINTASFHELRRLEGVGDATAAKIIAERTIRRFSNLED).

It belongs to the Crinkler effector family.

It is found in the secreted. The protein resides in the host nucleus. Its function is as follows. Secreted effector that suppresses plant basal defense and promotes plant susceptibility via targeting promoters of host HSP gene and thus inhibiting their expression. CRN108 binds directly to heat shock elements (HSEs) 5'-GAAnnTTC-3' and interferes with the association of the HSE with the plant heat shock transcription factors, which initializes HSP gene expression in response to stress. This Phytophthora sojae (Soybean stem and root rot agent) protein is Crinkler effector protein 108.